We begin with the raw amino-acid sequence, 369 residues long: Anhydro-N-acetylmuramic acid kinase (369 aa).

Position 12–19 (12–19 (GTSLDGVD)) interacts with ATP.

This sequence belongs to the anhydro-N-acetylmuramic acid kinase family.

It carries out the reaction 1,6-anhydro-N-acetyl-beta-muramate + ATP + H2O = N-acetyl-D-muramate 6-phosphate + ADP + H(+). The protein operates within amino-sugar metabolism; 1,6-anhydro-N-acetylmuramate degradation. Its pathway is cell wall biogenesis; peptidoglycan recycling. Functionally, catalyzes the specific phosphorylation of 1,6-anhydro-N-acetylmuramic acid (anhMurNAc) with the simultaneous cleavage of the 1,6-anhydro ring, generating MurNAc-6-P. Is required for the utilization of anhMurNAc either imported from the medium or derived from its own cell wall murein, and thus plays a role in cell wall recycling. This chain is Anhydro-N-acetylmuramic acid kinase, found in Escherichia coli (strain K12 / MC4100 / BW2952).